Here is a 375-residue protein sequence, read N- to C-terminus: uncharacterized protein (375 aa).

Residues lysine 78–proline 302 enclose the Radical SAM core domain. Cysteine 92, cysteine 98, and cysteine 101 together coordinate [4Fe-4S] cluster.

[4Fe-4S] cluster serves as cofactor.

This is an uncharacterized protein from Methanocaldococcus jannaschii (strain ATCC 43067 / DSM 2661 / JAL-1 / JCM 10045 / NBRC 100440) (Methanococcus jannaschii).